We begin with the raw amino-acid sequence, 205 residues long: High frequency lysogenization protein HflD homolog (205 aa).

The protein belongs to the HflD family.

It is found in the cytoplasm. It localises to the cell inner membrane. The sequence is that of High frequency lysogenization protein HflD homolog from Shewanella pealeana (strain ATCC 700345 / ANG-SQ1).